Here is a 337-residue protein sequence, read N- to C-terminus: Phenylalanine--tRNA ligase alpha subunit (337 aa).

Glutamate 252 contacts Mg(2+).

It belongs to the class-II aminoacyl-tRNA synthetase family. Phe-tRNA synthetase alpha subunit type 1 subfamily. In terms of assembly, tetramer of two alpha and two beta subunits. Requires Mg(2+) as cofactor.

It localises to the cytoplasm. The enzyme catalyses tRNA(Phe) + L-phenylalanine + ATP = L-phenylalanyl-tRNA(Phe) + AMP + diphosphate + H(+). This chain is Phenylalanine--tRNA ligase alpha subunit, found in Cellvibrio japonicus (strain Ueda107) (Pseudomonas fluorescens subsp. cellulosa).